Consider the following 118-residue polypeptide: Basic phospholipase A2 PA-13 (118 aa).

7 disulfides stabilise this stretch: Cys11–Cys71, Cys27–Cys117, Cys29–Cys45, Cys44–Cys98, Cys51–Cys91, Cys60–Cys84, and Cys78–Cys89. 3 residues coordinate Ca(2+): Tyr28, Gly30, and Gly32. The active site involves His48. A Ca(2+)-binding site is contributed by Asp49. Asp92 is an active-site residue.

Belongs to the phospholipase A2 family. Group I subfamily. D49 sub-subfamily. Ca(2+) is required as a cofactor. Expressed by the venom gland.

It localises to the secreted. It carries out the reaction a 1,2-diacyl-sn-glycero-3-phosphocholine + H2O = a 1-acyl-sn-glycero-3-phosphocholine + a fatty acid + H(+). Functionally, PLA2 catalyzes the calcium-dependent hydrolysis of the 2-acyl groups in 3-sn-phosphoglycerides. The protein is Basic phospholipase A2 PA-13 of Pseudechis australis (Mulga snake).